The sequence spans 237 residues: Phosphoribosylaminoimidazole-succinocarboxamide synthase (237 aa).

It belongs to the SAICAR synthetase family.

The enzyme catalyses 5-amino-1-(5-phospho-D-ribosyl)imidazole-4-carboxylate + L-aspartate + ATP = (2S)-2-[5-amino-1-(5-phospho-beta-D-ribosyl)imidazole-4-carboxamido]succinate + ADP + phosphate + 2 H(+). The protein operates within purine metabolism; IMP biosynthesis via de novo pathway; 5-amino-1-(5-phospho-D-ribosyl)imidazole-4-carboxamide from 5-amino-1-(5-phospho-D-ribosyl)imidazole-4-carboxylate: step 1/2. This chain is Phosphoribosylaminoimidazole-succinocarboxamide synthase, found in Salmonella arizonae (strain ATCC BAA-731 / CDC346-86 / RSK2980).